Consider the following 403-residue polypeptide: uncharacterized protein (403 aa).

Polar residues predominate over residues 55-88 (LTGSPNPQATPKQENKSNFFSEKQSVRENGNSSA). Residues 55 to 95 (LTGSPNPQATPKQENKSNFFSEKQSVRENGNSSAGEKKQKW) are disordered. The residue at position 58 (Ser-58) is a Phosphoserine. Residues 113-177 (QYYEILDLKK…NLRAHYDRTG (65 aa)) form the J domain. The helical transmembrane segment at 263-283 (SIFYQLLPLIVVILFAFLSNF) threads the bilayer.

It localises to the endoplasmic reticulum membrane. This is an uncharacterized protein from Schizosaccharomyces pombe (strain 972 / ATCC 24843) (Fission yeast).